A 261-amino-acid chain; its full sequence is Cytochrome c oxidase subunit 3 (261 aa).

At 1–15 (MAHQAHAYHMVDPSP) the chain is on the mitochondrial matrix side. Residues 16–34 (WPLTGAIAALLLTSGTAVW) form a helical membrane-spanning segment. At 35 to 40 (FHFHSL) the chain is on the mitochondrial intermembrane side. Residues 41–66 (TLLTLGNVLLLLTMYQWWRDIIREGT) form a helical membrane-spanning segment. Over 67–72 (FQGHHT) the chain is Mitochondrial matrix. Residues 73-105 (PPVQKGLRYGMILFITSEVFFFLGFFWAFYHAS) form a helical membrane-spanning segment. The Mitochondrial intermembrane segment spans residues 106 to 128 (LAPTPELGGCWPPTGITTLDPFE). The chain crosses the membrane as a helical span at residues 129 to 152 (VPLLNTAVLLASGVTVTWAHHSIM). Topologically, residues 153-155 (EGE) are mitochondrial matrix. Residues 156–183 (RKQTIQALTLTILLGFYFTFLQGMEYYE) traverse the membrane as a helical segment. Residues 184–190 (APFTIAD) are Mitochondrial intermembrane-facing. The helical transmembrane segment at 191 to 223 (GVYGSTFFVATGFHGLHVIIGSTFLAVCLLRQV) threads the bilayer. Residues 224 to 232 (QYHFTSEHH) lie on the Mitochondrial matrix side of the membrane. Residues 233–256 (FGFEAAAWYWHFVDVVWLFLYVSI) traverse the membrane as a helical segment. Over 257 to 261 (YWWGS) the chain is Mitochondrial intermembrane.

It belongs to the cytochrome c oxidase subunit 3 family. As to quaternary structure, component of the cytochrome c oxidase (complex IV, CIV), a multisubunit enzyme composed of 14 subunits. The complex is composed of a catalytic core of 3 subunits MT-CO1, MT-CO2 and MT-CO3, encoded in the mitochondrial DNA, and 11 supernumerary subunits COX4I, COX5A, COX5B, COX6A, COX6B, COX6C, COX7A, COX7B, COX7C, COX8 and NDUFA4, which are encoded in the nuclear genome. The complex exists as a monomer or a dimer and forms supercomplexes (SCs) in the inner mitochondrial membrane with NADH-ubiquinone oxidoreductase (complex I, CI) and ubiquinol-cytochrome c oxidoreductase (cytochrome b-c1 complex, complex III, CIII), resulting in different assemblies (supercomplex SCI(1)III(2)IV(1) and megacomplex MCI(2)III(2)IV(2)).

The protein resides in the mitochondrion inner membrane. The enzyme catalyses 4 Fe(II)-[cytochrome c] + O2 + 8 H(+)(in) = 4 Fe(III)-[cytochrome c] + 2 H2O + 4 H(+)(out). Component of the cytochrome c oxidase, the last enzyme in the mitochondrial electron transport chain which drives oxidative phosphorylation. The respiratory chain contains 3 multisubunit complexes succinate dehydrogenase (complex II, CII), ubiquinol-cytochrome c oxidoreductase (cytochrome b-c1 complex, complex III, CIII) and cytochrome c oxidase (complex IV, CIV), that cooperate to transfer electrons derived from NADH and succinate to molecular oxygen, creating an electrochemical gradient over the inner membrane that drives transmembrane transport and the ATP synthase. Cytochrome c oxidase is the component of the respiratory chain that catalyzes the reduction of oxygen to water. Electrons originating from reduced cytochrome c in the intermembrane space (IMS) are transferred via the dinuclear copper A center (CU(A)) of subunit 2 and heme A of subunit 1 to the active site in subunit 1, a binuclear center (BNC) formed by heme A3 and copper B (CU(B)). The BNC reduces molecular oxygen to 2 water molecules using 4 electrons from cytochrome c in the IMS and 4 protons from the mitochondrial matrix. In Oncorhynchus masou (Cherry salmon), this protein is Cytochrome c oxidase subunit 3 (mt-co3).